A 901-amino-acid polypeptide reads, in one-letter code: Putative receptor protein kinase CRINKLY4 (901 aa).

The first 24 residues, 1-24, serve as a signal peptide directing secretion; the sequence is MDHVPALVLAGCCFLALLPGWACG. At 25-423 the chain is on the extracellular side; the sequence is LGSMSSIAVS…SRKLMAFQMR (399 aa). 7 repeat units span residues 33–68, 72–107, 125–160, 162–195, 203–236, 253–287, and 292–330. The segment at 33–330 is 7 X 36 AA repeats; that stretch reads VSYGEDGPVF…PLALPMAVPP (298 aa). 2 N-linked (GlcNAc...) asparagine glycosylation sites follow: Asn151 and Asn179. N-linked (GlcNAc...) asparagine glycosylation is present at Asn282. 3 cysteine pairs are disulfide-bonded: Cys338–Cys365, Cys368–Cys382, and Cys372–Cys390. The TNFR-Cys repeat unit spans residues 357 to 391; that stretch reads CKPANSRLCLPCSTGCPEGLYESSPCNATADRVCQ. The N-linked (GlcNAc...) asparagine glycan is linked to Asn383. The chain crosses the membrane as a helical span at residues 424–444; the sequence is IFVAEIVFAVVLVLSVSVTTC. Residues 445–901 are Cytoplasmic-facing; the sequence is LYVRHKLRHC…QENLYLQHNF (457 aa). The region spanning 505–712 is the Protein kinase domain; that stretch reads FSEDSQVGKG…EILSGRKAID (208 aa). ATP-binding positions include 511 to 519 and Lys533; that span reads VGKGSFSCV. The active-site Proton acceptor is Asp634. Positions 845-876 are disordered; the sequence is VTSSQRRKSSASEADIVGRRATDGRNVGSSIG.

The protein belongs to the protein kinase superfamily. Ser/Thr protein kinase family. In terms of assembly, homodimer.

It is found in the cell membrane. The protein resides in the endosome. The protein localises to the multivesicular body membrane. It carries out the reaction L-seryl-[protein] + ATP = O-phospho-L-seryl-[protein] + ADP + H(+). It catalyses the reaction L-threonyl-[protein] + ATP = O-phospho-L-threonyl-[protein] + ADP + H(+). Its function is as follows. Putative receptor protein kinase. Could play a role in a differentiation signal. The CRINKLY4 (CR4) mutation affects leaf epidermis differentiation such that cell size and morphology are altered, and surface functions are compromised, allowing graft-like fusions between organs. The protein is Putative receptor protein kinase CRINKLY4 (CR4) of Zea mays (Maize).